Reading from the N-terminus, the 227-residue chain is MELVFIRHGFSEWNAKNLFTGWRDVNLTERGIEEAKSAGQKLKAAGYEFDIAFTSVLTRAIKTCNIVLEESNQLWIPQVKNWRLNERHYGALQGLDKKATAEQYGDEQVHIWRRSYDISPPDLDAADPNSAHNDRRYAHLPKDVIPNAENLKITLERVLPFWEDQIAPALLSGKRVLVTAHGNSLRALAKHIIGISDAEIMDFEIPTGQPLVLKLDDKLNFVEKFYL.

Residues 7–14 (RHGFSEWN), 20–21 (TG), R59, 86–89 (ERHY), K97, 113–114 (RR), and 182–183 (GN) contribute to the substrate site. H8 acts as the Tele-phosphohistidine intermediate in catalysis. Catalysis depends on E86, which acts as the Proton donor/acceptor.

Belongs to the phosphoglycerate mutase family. BPG-dependent PGAM subfamily. As to quaternary structure, homodimer.

The enzyme catalyses (2R)-2-phosphoglycerate = (2R)-3-phosphoglycerate. It functions in the pathway carbohydrate degradation; glycolysis; pyruvate from D-glyceraldehyde 3-phosphate: step 3/5. Catalyzes the interconversion of 2-phosphoglycerate and 3-phosphoglycerate. The polypeptide is 2,3-bisphosphoglycerate-dependent phosphoglycerate mutase (Actinobacillus pleuropneumoniae serotype 5b (strain L20)).